Consider the following 155-residue polypeptide: Probable Brix domain-containing ribosomal biogenesis protein (155 aa).

The 155-residue stretch at 1–155 (MLITSSRKPS…KNYRKMVMSE (155 aa)) folds into the Brix domain.

Functionally, probably involved in the biogenesis of the ribosome. This chain is Probable Brix domain-containing ribosomal biogenesis protein, found in Methanococcoides burtonii (strain DSM 6242 / NBRC 107633 / OCM 468 / ACE-M).